The following is a 161-amino-acid chain: Tick receptor for ospA (161 aa).

Interacts with ospA protein from B.burgdorferi. Post-translationally, glycosylated. As to expression, specifically expressed in gut. Localizes predominantly in the intercellular spaces and luminal surface of the gut. In the gut, it localizes along tight junctions. Not expressed in salivary gland or hemolymph.

The protein resides in the cell membrane. In terms of biological role, serves as a receptor for ospA protein of B.burgdorferi, the Lyme disease agent. Required for spirochetal colonization. Essential for pathogen adherence to the vector. The polypeptide is Tick receptor for ospA (TROSPA) (Ixodes scapularis (Black-legged tick)).